The primary structure comprises 354 residues: Holliday junction branch migration complex subunit RuvB (354 aa).

A large ATPase domain (RuvB-L) region spans residues 1-183 (MTGDNLVSAY…FGFVAHLDFY (183 aa)). ATP is bound by residues Arg23, Gly64, Lys67, Thr68, Ser69, 130-132 (EDF), Arg173, Tyr183, and Arg220. Thr68 provides a ligand contact to Mg(2+). The segment at 184 to 254 (SPADLETLLN…TAQAALTVYD (71 aa)) is small ATPAse domain (RuvB-S). Positions 257 to 354 (ALGLDRLDRA…DLFSVEPDQP (98 aa)) are head domain (RuvB-H). DNA is bound by residues Arg312 and Arg317.

The protein belongs to the RuvB family. As to quaternary structure, homohexamer. Forms an RuvA(8)-RuvB(12)-Holliday junction (HJ) complex. HJ DNA is sandwiched between 2 RuvA tetramers; dsDNA enters through RuvA and exits via RuvB. An RuvB hexamer assembles on each DNA strand where it exits the tetramer. Each RuvB hexamer is contacted by two RuvA subunits (via domain III) on 2 adjacent RuvB subunits; this complex drives branch migration. In the full resolvosome a probable DNA-RuvA(4)-RuvB(12)-RuvC(2) complex forms which resolves the HJ.

The protein resides in the cytoplasm. It carries out the reaction ATP + H2O = ADP + phosphate + H(+). In terms of biological role, the RuvA-RuvB-RuvC complex processes Holliday junction (HJ) DNA during genetic recombination and DNA repair, while the RuvA-RuvB complex plays an important role in the rescue of blocked DNA replication forks via replication fork reversal (RFR). RuvA specifically binds to HJ cruciform DNA, conferring on it an open structure. The RuvB hexamer acts as an ATP-dependent pump, pulling dsDNA into and through the RuvAB complex. RuvB forms 2 homohexamers on either side of HJ DNA bound by 1 or 2 RuvA tetramers; 4 subunits per hexamer contact DNA at a time. Coordinated motions by a converter formed by DNA-disengaged RuvB subunits stimulates ATP hydrolysis and nucleotide exchange. Immobilization of the converter enables RuvB to convert the ATP-contained energy into a lever motion, pulling 2 nucleotides of DNA out of the RuvA tetramer per ATP hydrolyzed, thus driving DNA branch migration. The RuvB motors rotate together with the DNA substrate, which together with the progressing nucleotide cycle form the mechanistic basis for DNA recombination by continuous HJ branch migration. Branch migration allows RuvC to scan DNA until it finds its consensus sequence, where it cleaves and resolves cruciform DNA. The chain is Holliday junction branch migration complex subunit RuvB from Salinispora tropica (strain ATCC BAA-916 / DSM 44818 / JCM 13857 / NBRC 105044 / CNB-440).